Reading from the N-terminus, the 134-residue chain is Profilin-4 (134 aa).

A disulfide bridge connects residues cysteine 13 and cysteine 118. An Involved in PIP2 interaction motif is present at residues alanine 84–threonine 100. Phosphothreonine is present on threonine 114.

This sequence belongs to the profilin family. In terms of assembly, occurs in many kinds of cells as a complex with monomeric actin in a 1:1 ratio. Phosphorylated by MAP kinases.

The protein localises to the cytoplasm. The protein resides in the cytoskeleton. Its function is as follows. Binds to actin and affects the structure of the cytoskeleton. At high concentrations, profilin prevents the polymerization of actin, whereas it enhances it at low concentrations. The protein is Profilin-4 of Olea europaea (Common olive).